The following is a 172-amino-acid chain: Myosin regulatory light polypeptide 9 (172 aa).

Residues 1 to 16 show a composition bias toward basic residues; sequence MSSKRAKAKTTKKRPQ. A disordered region spans residues 1–20; the sequence is MSSKRAKAKTTKKRPQRATS. The residue at position 2 (S2) is an N-acetylserine. At T19 the chain carries Phosphothreonine; by MLCK, CIT and ROCK2. S20 is modified (phosphoserine; by CDC42BP, CIT, MLCK, PAK1, ROCK1, ROCK2, DAPK1, DAPK2 and ZIPK/DAPK3). 3 consecutive EF-hand domains span residues 29–64, 98–133, and 134–169; these read SQIQ…LGKN, DPED…MGDR, and FTDE…GAKD. Positions 42, 44, 46, and 53 each coordinate Ca(2+).

In terms of assembly, myosin is a hexamer of 2 heavy chains and 4 light chains: interacts with myosin heavy chain MYO19. Interacts with LUZP1; the interaction results in inhibition of phosphorylation of MYL9 by DAPK3. Post-translationally, phosphorylation increases the actin-activated myosin ATPase activity and thereby regulates the contractile activity. It is required to generate the driving force in the migration of the cells but not necessary for localization of myosin-2 at the leading edge. Phosphorylation is required for myotube formation. Phosphorylated by DAPK3; DAPK3-mediated phosphorylation is inhibited by LUZP1.

The protein resides in the cytoplasm. Its subcellular location is the cytoskeleton. It is found in the cell cortex. Functionally, myosin regulatory subunit that plays an important role in regulation of both smooth muscle and nonmuscle cell contractile activity via its phosphorylation. Implicated in cytokinesis, receptor capping, and cell locomotion. In myoblasts, regulates PIEZO1-dependent cortical actomyosin assembly involved in myotube formation. This chain is Myosin regulatory light polypeptide 9 (Myl9), found in Mus musculus (Mouse).